A 240-amino-acid chain; its full sequence is 2,3,4,5-tetrahydropyridine-2,6-dicarboxylate N-acetyltransferase (240 aa).

This sequence belongs to the transferase hexapeptide repeat family. DapH subfamily.

It carries out the reaction (S)-2,3,4,5-tetrahydrodipicolinate + acetyl-CoA + H2O = L-2-acetamido-6-oxoheptanedioate + CoA. Its pathway is amino-acid biosynthesis; L-lysine biosynthesis via DAP pathway; LL-2,6-diaminopimelate from (S)-tetrahydrodipicolinate (acetylase route): step 1/3. Its function is as follows. Catalyzes the transfer of an acetyl group from acetyl-CoA to tetrahydrodipicolinate. This chain is 2,3,4,5-tetrahydropyridine-2,6-dicarboxylate N-acetyltransferase, found in Halalkalibacterium halodurans (strain ATCC BAA-125 / DSM 18197 / FERM 7344 / JCM 9153 / C-125) (Bacillus halodurans).